We begin with the raw amino-acid sequence, 111 residues long: uncharacterized protein (111 aa).

A helical membrane pass occupies residues 81 to 101; it reads YFFLLFYVSFPHIFLGLFFFI.

The protein resides in the membrane. This is an uncharacterized protein from Schizosaccharomyces pombe (strain 972 / ATCC 24843) (Fission yeast).